We begin with the raw amino-acid sequence, 254 residues long: Probable septum site-determining protein MinC (254 aa).

Belongs to the MinC family. Interacts with MinD and FtsZ.

Functionally, cell division inhibitor that blocks the formation of polar Z ring septums. Rapidly oscillates between the poles of the cell to destabilize FtsZ filaments that have formed before they mature into polar Z rings. Prevents FtsZ polymerization. The protein is Probable septum site-determining protein MinC of Burkholderia ambifaria (strain ATCC BAA-244 / DSM 16087 / CCUG 44356 / LMG 19182 / AMMD) (Burkholderia cepacia (strain AMMD)).